Reading from the N-terminus, the 670-residue chain is Solute carrier organic anion transporter family member 1A1 (670 aa).

Topologically, residues 1 to 20 (MEETEKKVATQEGRFFSKMK) are cytoplasmic. The helical transmembrane segment at 21–40 (VFLMSLTCAYLAKSLSGVYM) threads the bilayer. Topologically, residues 41–59 (NSMLTQIERQFGIPTSVVG) are extracellular. Residues 60 to 80 (FITGSFEIGNLLLIVFVSYFG) traverse the membrane as a helical segment. The Cytoplasmic portion of the chain corresponds to 81–86 (RKLHRP). A helical membrane pass occupies residues 87–111 (IIIGVGCVVMGLGCFLMASPHFLMG). Residues 112–155 (RYKYETTISPTSNLSSNSFLCIENRTQTLKPTQDPTECVKEIKS) are Extracellular-facing. N-linked (GlcNAc...) asparagine glycans are attached at residues Asn-124 and Asn-135. A helical transmembrane segment spans residues 156-184 (LMWIYVLIGNTMRGIGETPIMPLGISYIE). Over 185–203 (DFAKSENSPLYIGILEMGK) the chain is Cytoplasmic. The helical transmembrane segment at 204 to 224 (IVGPIIGLLLGSFFARVYVDI) threads the bilayer. Over 225 to 242 (GSVNTDDLTITPTDTRWV) the chain is Extracellular. A helical transmembrane segment spans residues 243-267 (GAWWIGFLVCAGVNILTSIPFFFFP). Residues 268 to 311 (KTLPKKELQDNVDVTKYEKVEKHRERAKKENLGITKDFLPFMKS) lie on the Cytoplasmic side of the membrane. Residues 312–333 (LCCNPIYMLFSLTSVLQINGFA) traverse the membrane as a helical segment. Over 334-353 (STFTFLPKYLEQQYGKSTSE) the chain is Extracellular. The chain crosses the membrane as a helical span at residues 354–377 (AVFLIGVYSLPPVCLGYLISGFIM). Topologically, residues 378–381 (KKFK) are cytoplasmic. A helical membrane pass occupies residues 382–405 (ITVKKAAYIAFGLSLSEYFIFLCN). Residues 406–513 (YLLTCDNFPV…PECDNKLQYF (108 aa)) lie on the Extracellular side of the membrane. A Kazal-like domain is found at 433–488 (KNVLADCNTRCSCLTDTWDPVCGDNGLAYMSACLAGCEKSVGTGTNMVFQNCSCIG). Cystine bridges form between Cys-439/Cys-469, Cys-445/Cys-465, and Cys-454/Cys-486. Residues Asn-483 and Asn-492 are each glycosylated (N-linked (GlcNAc...) asparagine). Residues 514–536 (LIKSVFSSFIFSLAAIPGYMVLL) form a helical membrane-spanning segment. Residues 537-545 (RCVKSEEKS) are Cytoplasmic-facing. A helical membrane pass occupies residues 546–571 (IGVGLHAFFIRLLAGIPAPVYFGALI). The Extracellular segment spans residues 572–605 (DRTCLHWGTLKCGQPGACRMYDINRFRHIYLGLP). The chain crosses the membrane as a helical span at residues 606–623 (AAVRGSSFLPAVFILILM). The Cytoplasmic segment spans residues 624-670 (RKFHFPGDIHSPDTELAEMKLTEKESECTDVCRSPKVENDGELKTKL). Phosphoserine is present on Ser-634.

It belongs to the organo anion transporter (TC 2.A.60) family. In terms of assembly, binds to PDZK1. Interaction with PDZK1 is required for expression on hepatocyte surface. As to expression, highly expressed in liver, and at lower levels in kidney. Not detected in other tissues.

Its subcellular location is the basolateral cell membrane. It carries out the reaction estrone 3-sulfate(out) + hydrogencarbonate(in) = estrone 3-sulfate(in) + hydrogencarbonate(out). The catalysed reaction is taurocholate(out) + hydrogencarbonate(in) = taurocholate(in) + hydrogencarbonate(out). It catalyses the reaction L-thyroxine(out) = L-thyroxine(in). The enzyme catalyses prostaglandin E2(out) = prostaglandin E2(in). It carries out the reaction 17beta-estradiol 17-O-(beta-D-glucuronate)(out) = 17beta-estradiol 17-O-(beta-D-glucuronate)(in). The catalysed reaction is dehydroepiandrosterone 3-sulfate(out) = dehydroepiandrosterone 3-sulfate(in). Mediates the Na(+)-independent transport of organic anions such as steroid sulfate conjugates (dehydroepiandrosterone sulfate (DHEAS), 17-beta-glucuronosyl estradiol, estrone-3-sulfate), conjugated (taurocholate) and unconjugated (cholate) bile acids, prostaglandin E2 (PGE2) and L-thyroxine T4. Also capable of transporting sulfobromophthalein (BSP), ouabain and gadoxetate. Hydrogencarbonate/HCO3(-) acts as the probable counteranion that exchanges for organic anions. Shows a pH-sensitive substrate specificity which may be ascribed to the protonation state of the binding site and leads to a stimulation of substrate transport in an acidic microenvironment. The polypeptide is Solute carrier organic anion transporter family member 1A1 (Mus musculus (Mouse)).